A 168-amino-acid polypeptide reads, in one-letter code: Small ribosomal subunit protein uS5 (168 aa).

The 64-residue stretch at 17-80 (IEDQLVAVNR…EDGKKKMINV (64 aa)) folds into the S5 DRBM domain.

It belongs to the universal ribosomal protein uS5 family. In terms of assembly, part of the 30S ribosomal subunit. Contacts proteins S4 and S8.

With S4 and S12 plays an important role in translational accuracy. Functionally, located at the back of the 30S subunit body where it stabilizes the conformation of the head with respect to the body. This Lactobacillus acidophilus (strain ATCC 700396 / NCK56 / N2 / NCFM) protein is Small ribosomal subunit protein uS5.